We begin with the raw amino-acid sequence, 234 residues long: UPF0104 membrane protein MJ1078 (234 aa).

5 helical membrane-spanning segments follow: residues 32–52 (VGTVFIERVFDLVAMISLLFI), 70–90 (IKWGVIIILFLIILIFGFLIV), 123–143 (LITLSFTGWFIEGLTVYFIFL), 164–184 (LTAIPLTPSGLGVVEYALIYI), and 198–218 (VLILYRLISYFSIVLFGAIMF).

Belongs to the UPF0104 family.

It localises to the cell membrane. The polypeptide is UPF0104 membrane protein MJ1078 (Methanocaldococcus jannaschii (strain ATCC 43067 / DSM 2661 / JAL-1 / JCM 10045 / NBRC 100440) (Methanococcus jannaschii)).